A 162-amino-acid polypeptide reads, in one-letter code: Cadmium metallothionein (162 aa).

The propeptide occupies 1-2; that stretch reads MD.

The metallothioneins are involved in the cellular sequestration of toxic metal ions. In Tetrahymena thermophila, this protein is Cadmium metallothionein (MTT1).